A 193-amino-acid chain; its full sequence is FMN-dependent NADH:quinone oxidoreductase 1 (193 aa).

Residues Ser9, 15–17 (SIS), and 85–88 (MYNF) contribute to the FMN site.

It belongs to the azoreductase type 1 family. In terms of assembly, homodimer. It depends on FMN as a cofactor.

It catalyses the reaction 2 a quinone + NADH + H(+) = 2 a 1,4-benzosemiquinone + NAD(+). The catalysed reaction is N,N-dimethyl-1,4-phenylenediamine + anthranilate + 2 NAD(+) = 2-(4-dimethylaminophenyl)diazenylbenzoate + 2 NADH + 2 H(+). Functionally, quinone reductase that provides resistance to thiol-specific stress caused by electrophilic quinones. In terms of biological role, also exhibits azoreductase activity. Catalyzes the reductive cleavage of the azo bond in aromatic azo compounds to the corresponding amines. This is FMN-dependent NADH:quinone oxidoreductase 1 from Xanthomonas axonopodis pv. citri (strain 306).